Reading from the N-terminus, the 147-residue chain is uncharacterized protein (147 aa).

Residues 1 to 59 enclose the Response regulatory domain; that stretch reads MGAELVKWVKSHKIDAHIITFVAKMPYIDSIKLLEAGAKGCVWKTSHPAKLNRAIDSIS. The region spanning 78 to 143 is the HTH luxR-type domain; sequence RYSSDNQLTN…ELIKTALRMG (66 aa). The H-T-H motif DNA-binding region spans 102-121; it reads NKEIANFLQLSRKTVETHRL.

Post-translationally, overexpressed protein is phosphorylated in vitro by non-cognate histidine kinases BarA and UhpB.

This is an uncharacterized protein from Escherichia coli (strain K12).